A 538-amino-acid polypeptide reads, in one-letter code: Cytochrome P450 52-M1 (538 aa).

A helical transmembrane segment spans residues 18 to 38; that stretch reads GLLPLLFVAFLVLHEPIWLLW. Residue Cys484 coordinates heme.

The protein belongs to the cytochrome P450 family. The cofactor is heme.

It is found in the membrane. It carries out the reaction an omega-methyl-long-chain fatty acid + reduced [NADPH--hemoprotein reductase] + O2 = an omega-hydroxy-long-chain fatty acid + oxidized [NADPH--hemoprotein reductase] + H2O + H(+). The catalysed reaction is an (omega-1)-ethyl fatty acid + reduced [NADPH--hemoprotein reductase] + O2 = an (omega-1)-hydroxy-long-chain fatty acid + oxidized [NADPH--hemoprotein reductase] + H2O + H(+). The enzyme catalyses (9Z)-octadecenoate + reduced [NADPH--hemoprotein reductase] + O2 = 18-hydroxy-(9Z)-octadecenoate + oxidized [NADPH--hemoprotein reductase] + H2O + H(+). It catalyses the reaction (9Z)-octadecenoate + reduced [NADPH--hemoprotein reductase] + O2 = 17-hydroxy-(9Z)-octadecenoate + oxidized [NADPH--hemoprotein reductase] + H2O + H(+). It carries out the reaction (9Z,12Z)-octadecadienoate + reduced [NADPH--hemoprotein reductase] + O2 = 18-hydroxy-(9Z,12Z)-octadecadienoate + oxidized [NADPH--hemoprotein reductase] + H2O + H(+). The catalysed reaction is (9Z,12Z)-octadecadienoate + reduced [NADPH--hemoprotein reductase] + O2 = 17-hydroxy-(9Z,12Z)-octadecadienoate + oxidized [NADPH--hemoprotein reductase] + H2O + H(+). The enzyme catalyses hexadecanoate + reduced [NADPH--hemoprotein reductase] + O2 = 16-hydroxyhexadecanoate + oxidized [NADPH--hemoprotein reductase] + H2O + H(+). It catalyses the reaction (9Z)-hexadecenoate + reduced [NADPH--hemoprotein reductase] + O2 = (9Z)-16-hydroxyhexadec-9-enoate + oxidized [NADPH--hemoprotein reductase] + H2O + H(+). It carries out the reaction octadecanoate + reduced [NADPH--hemoprotein reductase] + O2 = 18-hydroxyoctadecanoate + oxidized [NADPH--hemoprotein reductase] + H2O + H(+). Functionally, catalyzes the first step of sophorolipid biosynthesis. Catalyzes the terminal (at the omega-position) or subterminal (at the omega(-1)-position) hydroxylation of a fatty acid. This converts the fatty acid to a substrate for the subsequent glycosyltransferase reactions. Oleic acid is the preferred substrate, but it acts on various other C-16, C-18 and C-20 saturated and unsaturated fatty acids, namely palmitic, palmitoleic, stearic, linoleic, cis-9,10-epoxystearic, trans-9,10-epoxystearic and arachidonic acid. The polypeptide is Cytochrome P450 52-M1 (Starmerella bombicola (Yeast)).